The sequence spans 291 residues: Probable L-ascorbate peroxidase 3, peroxisomal (291 aa).

H41 (proton acceptor) is an active-site residue. The segment at 114–133 (YVPGRRDSSDSPEEGRLPDA) is disordered. The span at 116–133 (PGRRDSSDSPEEGRLPDA) shows a compositional bias: basic and acidic residues. H161 provides a ligand contact to heme b. K(+)-binding residues include T162, T178, and D185. The helical transmembrane segment at 263–283 (LLMQTAAGVAVAAAVVAWAYL) threads the bilayer.

Belongs to the peroxidase family. Ascorbate peroxidase subfamily. Heme b serves as cofactor. In terms of tissue distribution, expressed in stems.

The protein localises to the peroxisome membrane. The catalysed reaction is L-ascorbate + H2O2 = L-dehydroascorbate + 2 H2O. Plays a key role in hydrogen peroxide removal. This Oryza sativa subsp. japonica (Rice) protein is Probable L-ascorbate peroxidase 3, peroxisomal.